Here is a 343-residue protein sequence, read N- to C-terminus: S-adenosylmethionine:tRNA ribosyltransferase-isomerase (343 aa).

Belongs to the QueA family. Monomer.

Its subcellular location is the cytoplasm. It catalyses the reaction 7-aminomethyl-7-carbaguanosine(34) in tRNA + S-adenosyl-L-methionine = epoxyqueuosine(34) in tRNA + adenine + L-methionine + 2 H(+). It functions in the pathway tRNA modification; tRNA-queuosine biosynthesis. Its function is as follows. Transfers and isomerizes the ribose moiety from AdoMet to the 7-aminomethyl group of 7-deazaguanine (preQ1-tRNA) to give epoxyqueuosine (oQ-tRNA). This chain is S-adenosylmethionine:tRNA ribosyltransferase-isomerase, found in Enterococcus faecalis (strain ATCC 700802 / V583).